Consider the following 84-residue polypeptide: Small ribosomal subunit protein bS20 (84 aa).

The protein belongs to the bacterial ribosomal protein bS20 family.

In terms of biological role, binds directly to 16S ribosomal RNA. This is Small ribosomal subunit protein bS20 from Azobacteroides pseudotrichonymphae genomovar. CFP2.